We begin with the raw amino-acid sequence, 264 residues long: S-adenosylmethionine decarboxylase proenzyme (264 aa).

The active-site Schiff-base intermediate with substrate; via pyruvic acid is serine 112. Residue serine 112 is modified to Pyruvic acid (Ser); by autocatalysis. Histidine 117 (proton acceptor; for processing activity) is an active-site residue. The active-site Proton donor; for catalytic activity is cysteine 140.

It belongs to the prokaryotic AdoMetDC family. Type 2 subfamily. As to quaternary structure, heterooctamer of four alpha and four beta chains arranged as a tetramer of alpha/beta heterodimers. The cofactor is pyruvate. Is synthesized initially as an inactive proenzyme. Formation of the active enzyme involves a self-maturation process in which the active site pyruvoyl group is generated from an internal serine residue via an autocatalytic post-translational modification. Two non-identical subunits are generated from the proenzyme in this reaction, and the pyruvate is formed at the N-terminus of the alpha chain, which is derived from the carboxyl end of the proenzyme. The post-translation cleavage follows an unusual pathway, termed non-hydrolytic serinolysis, in which the side chain hydroxyl group of the serine supplies its oxygen atom to form the C-terminus of the beta chain, while the remainder of the serine residue undergoes an oxidative deamination to produce ammonia and the pyruvoyl group blocking the N-terminus of the alpha chain.

The enzyme catalyses S-adenosyl-L-methionine + H(+) = S-adenosyl 3-(methylsulfanyl)propylamine + CO2. It participates in amine and polyamine biosynthesis; S-adenosylmethioninamine biosynthesis; S-adenosylmethioninamine from S-adenosyl-L-methionine: step 1/1. Functionally, catalyzes the decarboxylation of S-adenosylmethionine to S-adenosylmethioninamine (dcAdoMet), the propylamine donor required for the synthesis of the polyamines spermine and spermidine from the diamine putrescine. This is S-adenosylmethionine decarboxylase proenzyme from Citrobacter koseri (strain ATCC BAA-895 / CDC 4225-83 / SGSC4696).